The sequence spans 183 residues: Capsid protein (183 aa).

Residues 136–183 (NAPILSTLPETTVVRRRGRSPRRRTPSPRRRRSQSPRRRRSQSRESQC) form a disordered region. The segment covering 149–176 (VRRRGRSPRRRTPSPRRRRSQSPRRRRS) has biased composition (basic residues). Phosphoserine; by host is present on residues Ser155, Ser162, and Ser170. One copy of the 1; half-length repeat lies at 155-161 (SPRRRTP). The interval 155-177 (SPRRRTPSPRRRRSQSPRRRRSQ) is 3 X 8 AA repeats of S-P-R-R-R-[PR]-S-Q. The Bipartite nuclear localization signal signature appears at 158-175 (RRTPSPRRRRSQSPRRRR). 2 tandem repeats follow at residues 162 to 169 (SPRRRRSQ) and 170 to 177 (SPRRRRSQ). The interval 177-183 (QSRESQC) is RNA binding.

The protein belongs to the orthohepadnavirus core antigen family. In terms of assembly, homodimerizes, then multimerizes. Interacts with cytosol exposed regions of viral L glycoprotein present in the reticulum-to-Golgi compartment. Interacts with human FLNB. Phosphorylated form interacts with host importin alpha; this interaction depends on the exposure of the NLS, which itself depends upon genome maturation and/or phosphorylation of the capsid protein. Interacts with host NUP153. Post-translationally, phosphorylated by host SRPK1, SRPK2, and maybe protein kinase C or GAPDH. Phosphorylation is critical for pregenomic RNA packaging. Protein kinase C phosphorylation is stimulated by HBx protein and may play a role in transport of the viral genome to the nucleus at the late step during the viral replication cycle.

It localises to the virion. The protein localises to the host cytoplasm. Its function is as follows. Self assembles to form an icosahedral capsid. Most capsids appear to be large particles with an icosahedral symmetry of T=4 and consist of 240 copies of capsid protein, though a fraction forms smaller T=3 particles consisting of 180 capsid proteins. Entering capsids are transported along microtubules to the nucleus. Phosphorylation of the capsid is thought to induce exposure of nuclear localization signal in the C-terminal portion of the capsid protein that allows binding to the nuclear pore complex via the importin (karyopherin-) alpha and beta. Capsids are imported in intact form through the nuclear pore into the nuclear basket, where it probably binds NUP153. Only capsids that contain the mature viral genome can release the viral DNA and capsid protein into the nucleoplasm. Immature capsids get stuck in the basket. Capsids encapsulate the pre-genomic RNA and the P protein. Pre-genomic RNA is reverse-transcribed into DNA while the capsid is still in the cytoplasm. The capsid can then either be directed to the nucleus, providing more genomes for transcription, or bud through the endoplasmic reticulum to provide new virions. The polypeptide is Capsid protein (Hepatitis B virus genotype B2 (isolate Indonesia/pIDW420/1988) (HBV-B)).